Here is a 426-residue protein sequence, read N- to C-terminus: DNA polymerase processivity factor component A20 (426 aa).

This sequence belongs to the poxviruses A20 family. In terms of assembly, interacts with the DNA polymerase catalytic subunit E9. Interacts with UDG. Component of the Uracil-DNA glycosylase(UDG)-A20-polymerase complex; A20 and UDG form a heterodimeric processivity factor that associates with E9 to form the processive polymerase holoenzyme. Interacts with D5.

Plays an essential role in viral DNA replication by acting as the polymerase processivity factor together with protein D4. May serve as a bridge which links the DNA polymerase E9 and the uracil DNA glycosylase. The protein is DNA polymerase processivity factor component A20 of Vaccinia virus (strain Ankara) (VACV).